The sequence spans 310 residues: Junctional adhesion molecule C (310 aa).

The signal sequence occupies residues 1–31 (MALRRPPRLRLCARLPDFFLLLLFRGCLIGA). Residues 32 to 241 (VNLKSSNRTP…EQEMEVYDLN (210 aa)) are Extracellular-facing. In terms of domain architecture, Ig-like V-type spans 35–127 (KSSNRTPVVQ…VARNDRKEID (93 aa)). 2 cysteine pairs are disulfide-bonded: cysteine 53/cysteine 115 and cysteine 160/cysteine 219. Residues asparagine 104 and asparagine 192 are each glycosylated (N-linked (GlcNAc...) asparagine). Residues 139-236 (PVTPVCRVPK…SARCEEQEME (98 aa)) enclose the Ig-like C2-type domain. Residues 242 to 262 (IGGIIGGVLVVLAVLALITLG) traverse the membrane as a helical segment. At 263 to 310 (ICCAYRRGYFINNKQDGESYKNPGKPDGVNYIRTDEEGDFRHKSSFVI) the chain is on the cytoplasmic side. 2 S-palmitoyl cysteine lipidation sites follow: cysteine 264 and cysteine 265.

This sequence belongs to the immunoglobulin superfamily. Interacts with ITGAM. Interacts with GORASP2. In terms of processing, proteolytically cleaved from endothelial cells surface into a soluble form by ADAM10 and ADAM17; the release of soluble JAM3 is increased by pro-inflammatory factors. S-palmitoylated by ZDHHC7. S-palmitoylation promotes expression at tight junctions. In terms of tissue distribution, detected on round and elongated spermatids (at protein level). Highest expression in placenta, brain and kidney. Significant expression is detected on platelets. Expressed in intestinal mucosa cells. Expressed in the vascular endothelium. Found in serum (at protein level). Also detected in the synovial fluid of patients with rheumatoid arthritis, psoriatic arthritis or ostearthritis (at protein level).

The protein localises to the cell membrane. It localises to the cell junction. It is found in the desmosome. The protein resides in the tight junction. Its subcellular location is the secreted. Functionally, junctional adhesion protein that mediates heterotypic cell-cell interactions with its cognate receptor JAM2 to regulate different cellular processes. Plays a role in homing and mobilization of hematopoietic stem and progenitor cells within the bone marrow. At the surface of bone marrow stromal cells, it contributes to the retention of the hematopoietic stem and progenitor cells expressing JAM3. Plays a central role in leukocytes extravasation by facilitating transmigration through the endothelium. Plays a role in spermatogenesis where JAM2 and JAM3, which are respectively expressed by Sertoli and germ cells, mediate an interaction between both cell types and play an essential role in the anchorage of germ cells onto Sertoli cells and the assembly of cell polarity complexes during spermatid differentiation. Also functions as a counter-receptor for ITGAM, mediating leukocyte-platelet interactions and is involved in the regulation of transepithelial migration of polymorphonuclear neutrophils (PMN). Plays a role in angiogenesis. Plays a role in the regulation of cell migration. During myogenesis, it is involved in myocyte fusion. Promotes chemotaxis of vascular endothelial cells and stimulates angiogenesis. The polypeptide is Junctional adhesion molecule C (JAM3) (Homo sapiens (Human)).